Consider the following 492-residue polypeptide: ATP synthase subunit beta, plastid (492 aa).

170 to 177 (GGAGVGKT) provides a ligand contact to ATP.

The protein belongs to the ATPase alpha/beta chains family. In terms of assembly, F-type ATPases have 2 components, CF(1) - the catalytic core - and CF(0) - the membrane proton channel. CF(1) has five subunits: alpha(3), beta(3), gamma(1), delta(1), epsilon(1). CF(0) has four main subunits: a(1), b(1), b'(1) and c(9-12).

It is found in the plastid membrane. It carries out the reaction ATP + H2O + 4 H(+)(in) = ADP + phosphate + 5 H(+)(out). Its function is as follows. Produces ATP from ADP in the presence of a proton gradient across the membrane. The catalytic sites are hosted primarily by the beta subunits. The polypeptide is ATP synthase subunit beta, plastid (Aneura mirabilis (Parasitic liverwort)).